We begin with the raw amino-acid sequence, 281 residues long: Tumor necrosis factor ligand superfamily member 10 (281 aa).

The Cytoplasmic segment spans residues 1 to 17 (MAMMEVQGGPSLGQTCV). Residues 18–38 (LIVIFTVLLQSLCVAVTYVYF) traverse the membrane as a helical; Signal-anchor for type II membrane protein segment. The Extracellular segment spans residues 39 to 281 (TNELKQMQDK…ASFFGAFLVG (243 aa)). Residues 122–280 (VAAHITGTRG…EASFFGAFLV (159 aa)) form the THD domain. The tract at residues 124-144 (AHITGTRGRSNTLSSPNSKNE) is disordered. The segment covering 130-141 (RGRSNTLSSPNS) has biased composition (polar residues). Zn(2+) is bound at residue Cys230.

This sequence belongs to the tumor necrosis factor family. In terms of assembly, homotrimer. One TNFSF10 homotrimer interacts with three TNFSF10A mononers. One TNFSF10 homotrimer interacts with three TNFSF10B mononers. Post-translationally, tyrosine phosphorylated by PKDCC/VLK. As to expression, widespread; most predominant in spleen, lung and prostate.

The protein localises to the cell membrane. Its subcellular location is the secreted. Its function is as follows. Cytokine that binds to TNFRSF10A/TRAILR1, TNFRSF10B/TRAILR2, TNFRSF10C/TRAILR3, TNFRSF10D/TRAILR4 and possibly also to TNFRSF11B/OPG. Induces apoptosis. Its activity may be modulated by binding to the decoy receptors TNFRSF10C/TRAILR3, TNFRSF10D/TRAILR4 and TNFRSF11B/OPG that cannot induce apoptosis. The chain is Tumor necrosis factor ligand superfamily member 10 (TNFSF10) from Homo sapiens (Human).